The primary structure comprises 213 residues: Orotate phosphoribosyltransferase (213 aa).

Lys-26 lines the 5-phospho-alpha-D-ribose 1-diphosphate pocket. Orotate is bound at residue 34–35 (FF). 5-phospho-alpha-D-ribose 1-diphosphate-binding positions include 72-73 (YK), Arg-99, Lys-100, Lys-103, His-105, and 124-132 (DDVITAGTA). Orotate-binding residues include Thr-128 and Arg-156.

It belongs to the purine/pyrimidine phosphoribosyltransferase family. PyrE subfamily. Homodimer. Mg(2+) is required as a cofactor.

The catalysed reaction is orotidine 5'-phosphate + diphosphate = orotate + 5-phospho-alpha-D-ribose 1-diphosphate. Its pathway is pyrimidine metabolism; UMP biosynthesis via de novo pathway; UMP from orotate: step 1/2. Its function is as follows. Catalyzes the transfer of a ribosyl phosphate group from 5-phosphoribose 1-diphosphate to orotate, leading to the formation of orotidine monophosphate (OMP). In Photobacterium profundum (strain SS9), this protein is Orotate phosphoribosyltransferase.